The following is a 109-amino-acid chain: Nucleoid-associated protein VV2410 (109 aa).

Residues 1–22 form a disordered region; sequence MFGKGGMGNLMKQAQQMQERMQ.

The protein belongs to the YbaB/EbfC family. Homodimer.

It localises to the cytoplasm. It is found in the nucleoid. In terms of biological role, binds to DNA and alters its conformation. May be involved in regulation of gene expression, nucleoid organization and DNA protection. In Vibrio vulnificus (strain YJ016), this protein is Nucleoid-associated protein VV2410.